A 286-amino-acid chain; its full sequence is 33 kDa chaperonin (286 aa).

Intrachain disulfides connect Cys236/Cys238 and Cys264/Cys267.

Belongs to the HSP33 family. Post-translationally, under oxidizing conditions two disulfide bonds are formed involving the reactive cysteines. Under reducing conditions zinc is bound to the reactive cysteines and the protein is inactive.

The protein localises to the cytoplasm. Its function is as follows. Redox regulated molecular chaperone. Protects both thermally unfolding and oxidatively damaged proteins from irreversible aggregation. Plays an important role in the bacterial defense system toward oxidative stress. In Carboxydothermus hydrogenoformans (strain ATCC BAA-161 / DSM 6008 / Z-2901), this protein is 33 kDa chaperonin.